The following is a 352-amino-acid chain: Photosystem II D2 protein (352 aa).

Threonine 2 carries the post-translational modification N-acetylthreonine. A Phosphothreonine modification is found at threonine 2. Residues 40–60 (CAYFALGGWLTGTTFVTSWYT) form a helical membrane-spanning segment. A chlorophyll a-binding site is contributed by histidine 117. The helical transmembrane segment at 124–140 (GFMLRQFEIARSVNLRP) threads the bilayer. Pheophytin a contacts are provided by glutamine 129 and asparagine 142. Residues 152–165 (VFVSVFLIYPLGQS) form a helical membrane-spanning segment. Chlorophyll a is bound at residue histidine 197. Residues 207 to 227 (AALLCAIHGATVENTLFEDGD) form a helical membrane-spanning segment. A plastoquinone is bound by residues histidine 214 and phenylalanine 261. Residue histidine 214 participates in Fe cation binding. Histidine 268 is a Fe cation binding site. The chain crosses the membrane as a helical span at residues 278–294 (GLWMSAIGVVGLALNLR).

It belongs to the reaction center PufL/M/PsbA/D family. PSII is composed of 1 copy each of membrane proteins PsbA, PsbB, PsbC, PsbD, PsbE, PsbF, PsbH, PsbI, PsbJ, PsbK, PsbL, PsbM, PsbT, PsbX, PsbY, PsbZ, Psb30/Ycf12, at least 3 peripheral proteins of the oxygen-evolving complex and a large number of cofactors. It forms dimeric complexes. The D1/D2 heterodimer binds P680, chlorophylls that are the primary electron donor of PSII, and subsequent electron acceptors. It shares a non-heme iron and each subunit binds pheophytin, quinone, additional chlorophylls, carotenoids and lipids. There is also a Cl(-1) ion associated with D1 and D2, which is required for oxygen evolution. The PSII complex binds additional chlorophylls, carotenoids and specific lipids. is required as a cofactor. In terms of processing, phosphorylated in vitro.

It is found in the plastid. The protein localises to the chloroplast thylakoid membrane. It catalyses the reaction 2 a plastoquinone + 4 hnu + 2 H2O = 2 a plastoquinol + O2. Functionally, photosystem II (PSII) is a light-driven water:plastoquinone oxidoreductase that uses light energy to abstract electrons from H(2)O, generating O(2) and a proton gradient subsequently used for ATP formation. It consists of a core antenna complex that captures photons, and an electron transfer chain that converts photonic excitation into a charge separation. The D1/D2 (PsbA/PsbD) reaction center heterodimer binds P680, the primary electron donor of PSII as well as several subsequent electron acceptors. D2 is needed for assembly of a stable PSII complex. The sequence is that of Photosystem II D2 protein from Chlamydomonas reinhardtii (Chlamydomonas smithii).